We begin with the raw amino-acid sequence, 347 residues long: NADH-quinone oxidoreductase subunit H (347 aa).

8 consecutive transmembrane segments (helical) span residues Val21 to Ala41, Gly87 to Ile107, Ile118 to Leu138, Ala157 to Ala177, Gly195 to Ile215, Asn258 to Ile278, Leu283 to Phe303, and Trp323 to Leu343.

It belongs to the complex I subunit 1 family. In terms of assembly, NDH-1 is composed of 14 different subunits. Subunits NuoA, H, J, K, L, M, N constitute the membrane sector of the complex.

It is found in the cell inner membrane. The enzyme catalyses a quinone + NADH + 5 H(+)(in) = a quinol + NAD(+) + 4 H(+)(out). In terms of biological role, NDH-1 shuttles electrons from NADH, via FMN and iron-sulfur (Fe-S) centers, to quinones in the respiratory chain. The immediate electron acceptor for the enzyme in this species is believed to be ubiquinone. Couples the redox reaction to proton translocation (for every two electrons transferred, four hydrogen ions are translocated across the cytoplasmic membrane), and thus conserves the redox energy in a proton gradient. This subunit may bind ubiquinone. The protein is NADH-quinone oxidoreductase subunit H of Sphingopyxis alaskensis (strain DSM 13593 / LMG 18877 / RB2256) (Sphingomonas alaskensis).